A 367-amino-acid chain; its full sequence is C-X-C chemokine receptor type 3 (367 aa).

At 1–56 (MYLEVSERQVLDASDIAFLLENSTSPYDYGENESDFSDSPPCPQDFSLNFDRTFLP) the chain is on the extracellular side. A glycan (N-linked (GlcNAc...) asparagine) is linked at asparagine 22. 2 positions are modified to sulfotyrosine: tyrosine 27 and tyrosine 29. An N-linked (GlcNAc...) asparagine glycan is attached at asparagine 32. Residues 57 to 77 (VLYSLLFLLGLLGNGAVAAVL) traverse the membrane as a helical segment. Topologically, residues 78–89 (LSQRTALSSTDT) are cytoplasmic. A helical membrane pass occupies residues 90–110 (FLLHLAVADVLLVLTLPLWAV). The Extracellular portion of the chain corresponds to 111–125 (DAAAQWVFGSGLCKV). Cysteine 123 and cysteine 202 form a disulfide bridge. The helical transmembrane segment at 126 to 146 (AGALFNINFYAGAFLLACISF) threads the bilayer. Topologically, residues 147 to 168 (DRYLSIVHATQIYRRDPWVRVA) are cytoplasmic. Residues 169–189 (LTCIVVWGLCVLFALPDFIFL) form a helical membrane-spanning segment. The Extracellular segment spans residues 190–222 (SASHDQRLNATHCQYNFPQVGRTALRVLQLVAG). Asparagine 198 carries N-linked (GlcNAc...) asparagine glycosylation. A helical membrane pass occupies residues 223-243 (FLMPLLVMAYCYAHILAVLLV). Over 244 to 255 (SRGQRRFRAMRL) the chain is Cytoplasmic. Residues 256-276 (VVVVVVAFAVCWTPYHLVVLV) traverse the membrane as a helical segment. Topologically, residues 277–300 (DILMDVGVLARNCGRESHVDVAKS) are extracellular. Residues 301-321 (VTSGMGYMHCCLNPLLYAFVG) traverse the membrane as a helical segment. Residues 322-367 (VKFKEQMWMLLMRLGRSDQRGPQRQPSSSRRESSWSETTEASYLGL) lie on the Cytoplasmic side of the membrane. The interval 339-367 (DQRGPQRQPSSSRRESSWSETTEASYLGL) is disordered.

It belongs to the G-protein coupled receptor 1 family. Homomer. Forms heteromers with ACKR4. Interacts with PF4/CXCL4. In terms of processing, sulfation on Tyr-27 and Tyr-29 is essential for CXCL10 binding. N-glycosylated.

It is found in the cell membrane. In terms of biological role, receptor for the C-X-C chemokine CXCL9, CXCL10 and CXCL11 and mediates the proliferation, survival and angiogenic activity of mesangial cells through a heterotrimeric G-protein signaling pathway. Probably promotes cell chemotaxis response. Binds to CCL21. Upon activation by PF4, induces activated T-lymphocytes migration mediated via downstream Ras/extracellular signal-regulated kinase (ERK) signaling. In Rattus norvegicus (Rat), this protein is C-X-C chemokine receptor type 3 (Cxcr3).